A 306-amino-acid polypeptide reads, in one-letter code: Bifunctional protein FolD 1 (306 aa).

Residues 168–170, serine 193, and isoleucine 234 contribute to the NADP(+) site; that span reads GRS.

It belongs to the tetrahydrofolate dehydrogenase/cyclohydrolase family. In terms of assembly, homodimer.

It carries out the reaction (6R)-5,10-methylene-5,6,7,8-tetrahydrofolate + NADP(+) = (6R)-5,10-methenyltetrahydrofolate + NADPH. It catalyses the reaction (6R)-5,10-methenyltetrahydrofolate + H2O = (6R)-10-formyltetrahydrofolate + H(+). It functions in the pathway one-carbon metabolism; tetrahydrofolate interconversion. In terms of biological role, catalyzes the oxidation of 5,10-methylenetetrahydrofolate to 5,10-methenyltetrahydrofolate and then the hydrolysis of 5,10-methenyltetrahydrofolate to 10-formyltetrahydrofolate. This is Bifunctional protein FolD 1 from Rhizobium meliloti (strain 1021) (Ensifer meliloti).